The primary structure comprises 230 residues: MKKKKALPSLLYLVFIVLLPWGVSFSFNKCLELWIKNWWNTRQSETLLPYIQEKRILERFIELEELSLLDEMIKEKLKTHAQKPPIGIHKEIIQLVKMDNEDHLHIILHFSTNIICLAILSGFFFLSKEELVILNSWVQEFFYNLNDSIKAFFILLVTDFFVGFHSTRGWELVIRWVYNDLGWAPNELIFTIFVCSFPVILDTCLKFWVFFCLNRLSPSLVVIYHSISEA.

The next 4 membrane-spanning stretches (helical) occupy residues 7–27 (LPSL…SFSF), 106–126 (IILH…FFFL), 145–165 (LNDS…VGFH), and 181–201 (LGWA…PVIL).

This sequence belongs to the CemA family.

Its subcellular location is the plastid. It localises to the chloroplast inner membrane. The enzyme catalyses K(+)(in) + H(+)(out) = K(+)(out) + H(+)(in). Contributes to K(+)/H(+) antiport activity by supporting proton efflux to control proton extrusion and homeostasis in chloroplasts in a light-dependent manner to modulate photosynthesis. Prevents excessive induction of non-photochemical quenching (NPQ) under continuous-light conditions. Indirectly promotes efficient inorganic carbon uptake into chloroplasts. The sequence is that of Potassium/proton antiporter CemA from Lolium perenne (Perennial ryegrass).